The primary structure comprises 145 residues: Large ribosomal subunit protein uL13 (145 aa).

This sequence belongs to the universal ribosomal protein uL13 family. In terms of assembly, part of the 50S ribosomal subunit.

Functionally, this protein is one of the early assembly proteins of the 50S ribosomal subunit, although it is not seen to bind rRNA by itself. It is important during the early stages of 50S assembly. The polypeptide is Large ribosomal subunit protein uL13 (Halobacterium salinarum (strain ATCC 700922 / JCM 11081 / NRC-1) (Halobacterium halobium)).